Here is a 185-residue protein sequence, read N- to C-terminus: Ribosome-recycling factor (185 aa).

It belongs to the RRF family.

Its subcellular location is the cytoplasm. In terms of biological role, responsible for the release of ribosomes from messenger RNA at the termination of protein biosynthesis. May increase the efficiency of translation by recycling ribosomes from one round of translation to another. This is Ribosome-recycling factor from Shewanella baltica (strain OS185).